Reading from the N-terminus, the 362-residue chain is 3-dehydroquinate synthase (362 aa).

Residues 72–77, 106–110, 130–131, K143, K152, and 170–173 each bind NAD(+); these read DGEQYK, GVVGD, TT, and CLKT. Residues E185, H248, and H265 each coordinate Zn(2+).

Belongs to the sugar phosphate cyclases superfamily. Dehydroquinate synthase family. The cofactor is Co(2+). Requires Zn(2+) as cofactor. It depends on NAD(+) as a cofactor.

It is found in the cytoplasm. It carries out the reaction 7-phospho-2-dehydro-3-deoxy-D-arabino-heptonate = 3-dehydroquinate + phosphate. The protein operates within metabolic intermediate biosynthesis; chorismate biosynthesis; chorismate from D-erythrose 4-phosphate and phosphoenolpyruvate: step 2/7. In terms of biological role, catalyzes the conversion of 3-deoxy-D-arabino-heptulosonate 7-phosphate (DAHP) to dehydroquinate (DHQ). This Aliivibrio fischeri (strain ATCC 700601 / ES114) (Vibrio fischeri) protein is 3-dehydroquinate synthase.